An 802-amino-acid polypeptide reads, in one-letter code: Copal-8-ol diphosphate hydratase, chloroplastic (802 aa).

The transit peptide at 1 to 24 directs the protein to the chloroplast; it reads MQVIITSSHRFFCHHLHQLKSPTS. Lys-249 is a binding site for substrate. 2 residues coordinate Mg(2+): Asp-382 and Asp-384. Positions 382 to 385 match the DXDD motif motif; that stretch reads DVDD. Lys-468 contacts substrate.

Belongs to the terpene synthase family. Requires Mg(2+) as cofactor. In terms of tissue distribution, expressed specifically in the secretory cells of the glandular trichomes.

It is found in the plastid. It localises to the chloroplast. The catalysed reaction is (2E,6E,10E)-geranylgeranyl diphosphate + H2O = 8-hydroxycopalyl diphosphate. The protein operates within secondary metabolite biosynthesis; terpenoid biosynthesis. Class-II terpene synthase that synthesizes 8-hydroxy-copalyl diphosphate. Involved in the biosynthesis of cis-abienol, a labdane diterpene that can be used as synthesis precursor of ambergris substitution fragance products. The polypeptide is Copal-8-ol diphosphate hydratase, chloroplastic (Nicotiana tabacum (Common tobacco)).